Here is a 549-residue protein sequence, read N- to C-terminus: Chaperonin GroEL (549 aa).

Residues T29–P32, K50, D86–T90, G418, and D499 each bind ATP.

It belongs to the chaperonin (HSP60) family. As to quaternary structure, forms a cylinder of 14 subunits composed of two heptameric rings stacked back-to-back. Interacts with the co-chaperonin GroES.

It localises to the cytoplasm. It carries out the reaction ATP + H2O + a folded polypeptide = ADP + phosphate + an unfolded polypeptide.. Together with its co-chaperonin GroES, plays an essential role in assisting protein folding. The GroEL-GroES system forms a nano-cage that allows encapsulation of the non-native substrate proteins and provides a physical environment optimized to promote and accelerate protein folding. This is Chaperonin GroEL from Wolbachia pipientis wMel.